Here is a 254-residue protein sequence, read N- to C-terminus: 3-deoxy-manno-octulosonate cytidylyltransferase (254 aa).

The protein belongs to the KdsB family.

It localises to the cytoplasm. It catalyses the reaction 3-deoxy-alpha-D-manno-oct-2-ulosonate + CTP = CMP-3-deoxy-beta-D-manno-octulosonate + diphosphate. Its pathway is nucleotide-sugar biosynthesis; CMP-3-deoxy-D-manno-octulosonate biosynthesis; CMP-3-deoxy-D-manno-octulosonate from 3-deoxy-D-manno-octulosonate and CTP: step 1/1. It functions in the pathway bacterial outer membrane biogenesis; lipopolysaccharide biosynthesis. Functionally, activates KDO (a required 8-carbon sugar) for incorporation into bacterial lipopolysaccharide in Gram-negative bacteria. The sequence is that of 3-deoxy-manno-octulosonate cytidylyltransferase from Pseudomonas fluorescens (strain SBW25).